A 1125-amino-acid chain; its full sequence is Probable inorganic carbon transporter subunit DabA (1125 aa).

Zn(2+) contacts are provided by Cys-578, Asp-580, His-769, and Cys-784. A disordered region spans residues 1106–1125 (SDPRPPALVEPKQTETHHAA).

It belongs to the inorganic carbon transporter (TC 9.A.2) DabA family. As to quaternary structure, forms a complex with DabB. It depends on Zn(2+) as a cofactor.

The protein resides in the cell inner membrane. In terms of biological role, part of an energy-coupled inorganic carbon pump. The protein is Probable inorganic carbon transporter subunit DabA of Nitrosococcus oceani (strain ATCC 19707 / BCRC 17464 / JCM 30415 / NCIMB 11848 / C-107).